A 211-amino-acid chain; its full sequence is Proteasome subunit beta (211 aa).

A propeptide spans 1–9 (removed in mature form; by autocatalysis); that stretch reads MDNDKYLKG. Thr-10 (nucleophile) is an active-site residue.

This sequence belongs to the peptidase T1B family. As to quaternary structure, the 20S proteasome core is composed of 14 alpha and 14 beta subunits that assemble into four stacked heptameric rings, resulting in a barrel-shaped structure. The two inner rings, each composed of seven catalytic beta subunits, are sandwiched by two outer rings, each composed of seven alpha subunits. The catalytic chamber with the active sites is on the inside of the barrel. Has a gated structure, the ends of the cylinder being occluded by the N-termini of the alpha-subunits. Is capped at one or both ends by the proteasome regulatory ATPase, PAN.

The protein resides in the cytoplasm. The catalysed reaction is Cleavage of peptide bonds with very broad specificity.. The formation of the proteasomal ATPase PAN-20S proteasome complex, via the docking of the C-termini of PAN into the intersubunit pockets in the alpha-rings, triggers opening of the gate for substrate entry. Interconversion between the open-gate and close-gate conformations leads to a dynamic regulation of the 20S proteasome proteolysis activity. In terms of biological role, component of the proteasome core, a large protease complex with broad specificity involved in protein degradation. The polypeptide is Proteasome subunit beta (Methanosarcina barkeri (strain Fusaro / DSM 804)).